A 215-amino-acid polypeptide reads, in one-letter code: Orotate phosphoribosyltransferase (215 aa).

Lys26 contacts 5-phospho-alpha-D-ribose 1-diphosphate. Residue 34 to 35 (FF) participates in orotate binding. 5-phospho-alpha-D-ribose 1-diphosphate-binding positions include 72–73 (YK), Arg99, Lys100, Lys103, His105, and 124–132 (DDVITAGTA). 2 residues coordinate orotate: Thr128 and Arg156.

Belongs to the purine/pyrimidine phosphoribosyltransferase family. PyrE subfamily. Homodimer. Mg(2+) is required as a cofactor.

It catalyses the reaction orotidine 5'-phosphate + diphosphate = orotate + 5-phospho-alpha-D-ribose 1-diphosphate. It functions in the pathway pyrimidine metabolism; UMP biosynthesis via de novo pathway; UMP from orotate: step 1/2. Its function is as follows. Catalyzes the transfer of a ribosyl phosphate group from 5-phosphoribose 1-diphosphate to orotate, leading to the formation of orotidine monophosphate (OMP). This chain is Orotate phosphoribosyltransferase, found in Cellvibrio japonicus (strain Ueda107) (Pseudomonas fluorescens subsp. cellulosa).